Reading from the N-terminus, the 222-residue chain is 2-C-methyl-D-erythritol 4-phosphate cytidylyltransferase (222 aa).

Belongs to the IspD/TarI cytidylyltransferase family. IspD subfamily.

The catalysed reaction is 2-C-methyl-D-erythritol 4-phosphate + CTP + H(+) = 4-CDP-2-C-methyl-D-erythritol + diphosphate. Its pathway is isoprenoid biosynthesis; isopentenyl diphosphate biosynthesis via DXP pathway; isopentenyl diphosphate from 1-deoxy-D-xylulose 5-phosphate: step 2/6. Catalyzes the formation of 4-diphosphocytidyl-2-C-methyl-D-erythritol from CTP and 2-C-methyl-D-erythritol 4-phosphate (MEP). The chain is 2-C-methyl-D-erythritol 4-phosphate cytidylyltransferase from Thermotoga petrophila (strain ATCC BAA-488 / DSM 13995 / JCM 10881 / RKU-1).